We begin with the raw amino-acid sequence, 160 residues long: MTKKKSHKPGSATIALNKRARHEYFIEDEIEAGLSLQGWEVKSLRAGKANISDSYVIMRDGEAYLFGATITPLNVASTHVVCDPTRTRKLLLKQRELANLYGQINRDGYTVVALSLYWKNAWCKIKIGVAKGKKDHDKRDTIKDREWKLDKARIMKNANR.

It belongs to the SmpB family.

The protein localises to the cytoplasm. Its function is as follows. Required for rescue of stalled ribosomes mediated by trans-translation. Binds to transfer-messenger RNA (tmRNA), required for stable association of tmRNA with ribosomes. tmRNA and SmpB together mimic tRNA shape, replacing the anticodon stem-loop with SmpB. tmRNA is encoded by the ssrA gene; the 2 termini fold to resemble tRNA(Ala) and it encodes a 'tag peptide', a short internal open reading frame. During trans-translation Ala-aminoacylated tmRNA acts like a tRNA, entering the A-site of stalled ribosomes, displacing the stalled mRNA. The ribosome then switches to translate the ORF on the tmRNA; the nascent peptide is terminated with the 'tag peptide' encoded by the tmRNA and targeted for degradation. The ribosome is freed to recommence translation, which seems to be the essential function of trans-translation. The polypeptide is SsrA-binding protein (Proteus mirabilis (strain HI4320)).